The primary structure comprises 362 residues: Phosphoserine aminotransferase (362 aa).

The L-glutamate site is built by Ser-9 and Arg-42. Residues 76–77, Trp-102, Thr-153, Asp-174, and Gln-197 each bind pyridoxal 5'-phosphate; that span reads GR. At Lys-198 the chain carries N6-(pyridoxal phosphate)lysine. 239 to 240 is a pyridoxal 5'-phosphate binding site; the sequence is NT.

Belongs to the class-V pyridoxal-phosphate-dependent aminotransferase family. SerC subfamily. As to quaternary structure, homodimer. Pyridoxal 5'-phosphate is required as a cofactor.

It localises to the cytoplasm. It carries out the reaction O-phospho-L-serine + 2-oxoglutarate = 3-phosphooxypyruvate + L-glutamate. The enzyme catalyses 4-(phosphooxy)-L-threonine + 2-oxoglutarate = (R)-3-hydroxy-2-oxo-4-phosphooxybutanoate + L-glutamate. It participates in amino-acid biosynthesis; L-serine biosynthesis; L-serine from 3-phospho-D-glycerate: step 2/3. The protein operates within cofactor biosynthesis; pyridoxine 5'-phosphate biosynthesis; pyridoxine 5'-phosphate from D-erythrose 4-phosphate: step 3/5. Functionally, catalyzes the reversible conversion of 3-phosphohydroxypyruvate to phosphoserine and of 3-hydroxy-2-oxo-4-phosphonooxybutanoate to phosphohydroxythreonine. This is Phosphoserine aminotransferase from Salmonella newport (strain SL254).